A 359-amino-acid chain; its full sequence is Trans-enoyl reductase RAP1 (359 aa).

Residue 49–52 coordinates NADP(+); the sequence is CDFK. 137–144 is a binding site for substrate; the sequence is TCIATACM. NADP(+) contacts are provided by residues 195–198, Y213, and 260–261; these read SPKN and LE. Residue 281-285 coordinates substrate; that stretch reads GQMIL. 350 to 351 contributes to the NADP(+) binding site; the sequence is VA.

It belongs to the zinc-containing alcohol dehydrogenase family. As to quaternary structure, monomer.

The protein operates within secondary metabolite biosynthesis. In terms of biological role, trans-enoyl reductase; part of the gene cluster that mediates the biosynthesis of a tyrosine-derived cytochalasan acting as a fungal signal recognized by resistant rice plants and leads to avirulence in Pi33 resistant rice cultivars. The first step in the pathway is catalyzed by the hybrid PKS-NRPS ACE1, assisted by the enoyl reductase RAP1, that are responsible for fusion of the tyrosine precursor and the polyketide backbone. The polyketide synthase module (PKS) of ACE1 is responsible for the synthesis of the polyketide backbone and the downstream nonribosomal peptide synthetase (NRPS) amidates the carboxyl end of the polyketide with the tyrosine precursor. Because ACE1 lacks a designated enoylreductase (ER) domain, the required activity is provided the enoyl reductase RAP1. Reduction by the hydrolyase ORFZ, followed by dehydration and intra-molecular Diels-Alder cyclization by the Diels-Alderase ORF3 then yield the required isoindolone-fused macrocycle. A number of oxidative steps catalyzed by the tailoring enzymes identified within the cluster, including cytochrome P450 monooxygenases CYP1 to CYP4, the FAD-linked oxidoreductase OXR2 and the short-chain dehydrogenase/reductase OXR1, are further required to afford the final cytochalasans that confer avirulence and which have still to be identified. The monooxygenase CYP1 has been shown to be a site-selective C-18 hydroxylase whereas the function of CYP3 is the site-selective epoxidation of the C-6/C-7 olefin that is present in some intermediate compounds. Finally, SYN2 and RAP2 are not required for avirulence in Pi33 resistant rice cultivars. This chain is Trans-enoyl reductase RAP1, found in Pyricularia oryzae (strain 70-15 / ATCC MYA-4617 / FGSC 8958) (Rice blast fungus).